Here is a 929-residue protein sequence, read N- to C-terminus: LPS-assembly protein LptD (929 aa).

Residues 1–33 (MAVKSLVFRRKFPLLVTGSLLALQPVAALTVQA) form the signal peptide. The interval 58–101 (NLPPRPAHTATSVSTAAAGSSVSGSGGETVEAEPTQRLVTESGG) is disordered. Positions 66–90 (TATSVSTAAAGSSVSGSGGETVEAE) are enriched in low complexity.

Belongs to the LptD family. As to quaternary structure, component of the lipopolysaccharide transport and assembly complex. Interacts with LptE and LptA.

Its subcellular location is the cell outer membrane. Together with LptE, is involved in the assembly of lipopolysaccharide (LPS) at the surface of the outer membrane. This Pseudomonas aeruginosa (strain LESB58) protein is LPS-assembly protein LptD.